A 51-amino-acid polypeptide reads, in one-letter code: CMEPKKVGPCRAAMPRFYFNSASNKCEGFTYGGCDANHNNFQSEADCKKAC.

Disulfide bonds link Cys1–Cys51, Cys10–Cys34, and Cys26–Cys47.

This sequence belongs to the venom Kunitz-type family. Sea anemone type 2 potassium channel toxin subfamily.

It is found in the secreted. The protein localises to the nematocyst. Its function is as follows. Weak serine protease inhibitor that has been tested on both trypsin and elastase. May also act as a neurotoxin by inhibiting voltage-gated potassium channels (Kv). In vivo, is lethal to zebrafish larvae. The chain is Kunitz-like toxin PcKuz1 from Palythoa caribaeorum (White encrusting zoanthid coral).